Reading from the N-terminus, the 390-residue chain is Lipid-A-disaccharide synthase (390 aa).

Belongs to the LpxB family.

The catalysed reaction is a lipid X + a UDP-2-N,3-O-bis[(3R)-3-hydroxyacyl]-alpha-D-glucosamine = a lipid A disaccharide + UDP + H(+). The protein operates within bacterial outer membrane biogenesis; LPS lipid A biosynthesis. Condensation of UDP-2,3-diacylglucosamine and 2,3-diacylglucosamine-1-phosphate to form lipid A disaccharide, a precursor of lipid A, a phosphorylated glycolipid that anchors the lipopolysaccharide to the outer membrane of the cell. This chain is Lipid-A-disaccharide synthase, found in Haemophilus influenzae (strain PittGG).